The sequence spans 205 residues: uncharacterized protein (205 aa).

The next 2 membrane-spanning stretches (helical) occupy residues 12–32 (WQIY…GVGF) and 49–69 (WISS…VMSW).

Its subcellular location is the host membrane. This is an uncharacterized protein from Haemophilus influenzae (Bacteriophage HP1).